We begin with the raw amino-acid sequence, 448 residues long: N-succinylarginine dihydrolase (448 aa).

Substrate-binding positions include 19–28, N110, and 137–138; these read GGLSYGNVAS and HR. Residue E174 is part of the active site. A substrate-binding site is contributed by R214. H250 is an active-site residue. Residues D252 and N365 each contribute to the substrate site. C371 functions as the Nucleophile in the catalytic mechanism.

The protein belongs to the succinylarginine dihydrolase family. In terms of assembly, homodimer.

The enzyme catalyses N(2)-succinyl-L-arginine + 2 H2O + 2 H(+) = N(2)-succinyl-L-ornithine + 2 NH4(+) + CO2. Its pathway is amino-acid degradation; L-arginine degradation via AST pathway; L-glutamate and succinate from L-arginine: step 2/5. Catalyzes the hydrolysis of N(2)-succinylarginine into N(2)-succinylornithine, ammonia and CO(2). This Pseudomonas aeruginosa (strain UCBPP-PA14) protein is N-succinylarginine dihydrolase.